A 640-amino-acid chain; its full sequence is Auxin efflux carrier component 3 (640 aa).

The Extracellular segment spans residues 1–7 (MISWHDL). Residues 8 to 28 (YTVLTAVIPLYVAMILAYGSV) traverse the membrane as a helical segment. Topologically, residues 29-38 (RWWKIFSPDQ) are cytoplasmic. The chain crosses the membrane as a helical span at residues 39–59 (CSGINRFVAIFAVPLLSFHFI). Val-51 is a (indol-3-yl)acetate binding site. Over 60-71 (STNNPYAMNLRF) the chain is Extracellular. The helical transmembrane segment at 72–92 (IAADTLQKIIMLSLLVLWANF) threads the bilayer. Residues 93 to 101 (TRSGSLEWS) are Cytoplasmic-facing. A helical membrane pass occupies residues 102 to 122 (ITIFSLSTLPNTLVMGIPLLI). Residues Asn-112 and Leu-114 each coordinate (indol-3-yl)acetate. The Extracellular portion of the chain corresponds to 123–131 (AMYGEYSGS). The helical transmembrane segment at 132 to 152 (LMVQIVVLQCIIWYTLLLFLF) threads the bilayer. Tyr-145 is a binding site for (indol-3-yl)acetate. The Cytoplasmic portion of the chain corresponds to 153-500 (EFRGAKMLIM…LIRNPNTYSS (348 aa)). Residues Ser-226, Ser-243, and Ser-283 each carry the phosphoserine modification. Residues 310–351 (APNPEFSSTTTSTANKSVNKNPKDVNTNQQTTLPTGGKSNSH) are disordered. The segment covering 314-348 (EFSSTTTSTANKSVNKNPKDVNTNQQTTLPTGGKS) has biased composition (polar residues). At Thr-322 the chain carries Phosphothreonine. Residue Ser-366 is modified to Phosphoserine. Disordered regions lie at residues 372–391 (AGLN…RSDQ) and 404–471 (SHNG…SQRK). A compositionally biased stretch (basic and acidic residues) spans 430–442 (GKEEEAERPKDAE). A compositionally biased stretch (polar residues) spans 449-460 (APNSTAALQSKT). The helical transmembrane segment at 501 to 521 (LIGLIWALVAFRWHVAMPKII) threads the bilayer. Residues 522–524 (QQS) lie on the Extracellular side of the membrane. The chain crosses the membrane as a helical span at residues 525–545 (ISILSDAGLGMAMFSLGLFMA). Topologically, residues 546 to 559 (LQPKLIACGNSVAT) are cytoplasmic. A helical membrane pass occupies residues 560 to 580 (FAMAVRFLTGPAVMAVAAIAI). The Extracellular segment spans residues 581 to 585 (GLRGD). A helical transmembrane segment spans residues 586 to 606 (LLRVAIVQAALPQGIVPFVFA). (indol-3-yl)acetate is bound by residues Ile-600 and Val-601. The Cytoplasmic portion of the chain corresponds to 607–619 (KEYNVHPAILSTG). Residues 620-640 (VIFGMLIALPITLVYYILLGL) form a helical membrane-spanning segment.

It belongs to the auxin efflux carrier (TC 2.A.69.1) family. In terms of assembly, homodimer. In terms of tissue distribution, predominantly expressed at the lateral side of shoot endodermis cells as well as root pericycle and columella cells.

The protein localises to the cell membrane. With respect to regulation, auxin efflux carrier activity is competitively inhibited by naptalamate (N-1-naphthylphthalamic acid, NPA). Acts as a component of the auxin efflux carrier; this activity is enhanced when activated by PID-mediated phosphorylation. Seems to be involved in the lateral auxin transport system. Together with PIN4 and PIN7, involved in the connective auxin transport (CAT) that ensures communication across the shoot system, and modulates strigolactone-mediated shoot branching control. Binds auxins including indole-3-acetic acid (IAA). Coordinated polar localization of PIN3 is directly regulated by the vesicle trafficking process. This Arabidopsis thaliana (Mouse-ear cress) protein is Auxin efflux carrier component 3.